Consider the following 363-residue polypeptide: Uptake hydrogenase small subunit (363 aa).

The segment at residues 1–46 (MGAATETFYSVIRRQGITRRSFHKFCSLTATSLGLGPLAASRIANA) is a signal peptide (tat-type signal). Cys-63, Cys-66, Cys-161, Cys-195, His-233, Cys-236, Cys-261, and Cys-267 together coordinate [4Fe-4S] cluster. Residues Cys-276, Cys-295, and Cys-298 each coordinate [3Fe-4S] cluster.

The protein belongs to the [NiFe]/[NiFeSe] hydrogenase small subunit family. As to quaternary structure, heterodimer of a large and a small subunit. It depends on [4Fe-4S] cluster as a cofactor. [3Fe-4S] cluster serves as cofactor. Post-translationally, predicted to be exported by the Tat system. The position of the signal peptide cleavage has not been experimentally proven.

It is found in the cell membrane. It carries out the reaction H2 + A = AH2. This enzyme recycles the H(2) produced by nitrogenase to increase the production of ATP and to protect nitrogenase against inhibition or damage by O(2) under carbon- or phosphate-limited conditions. This chain is Uptake hydrogenase small subunit (hupA), found in Bradyrhizobium diazoefficiens (strain JCM 10833 / BCRC 13528 / IAM 13628 / NBRC 14792 / USDA 110).